A 68-amino-acid chain; its full sequence is MPQLNTAVWPTTITPMLLTLFLITQLKMLNSNYHLPPSPKPMKMKNYNKPWEPKWTKICSLHSLPPQS.

A helical transmembrane segment spans residues 8–24; sequence VWPTTITPMLLTLFLIT. K54 is modified (N6-acetyllysine; alternate). Residue K54 is modified to N6-succinyllysine; alternate. K57 carries the N6-acetyllysine modification.

Belongs to the ATPase protein 8 family. As to quaternary structure, component of the ATP synthase complex composed at least of ATP5F1A/subunit alpha, ATP5F1B/subunit beta, ATP5MC1/subunit c (homooctomer), MT-ATP6/subunit a, MT-ATP8/subunit 8, ATP5ME/subunit e, ATP5MF/subunit f, ATP5MG/subunit g, ATP5MK/subunit k, ATP5MJ/subunit j, ATP5F1C/subunit gamma, ATP5F1D/subunit delta, ATP5F1E/subunit epsilon, ATP5PF/subunit F6, ATP5PB/subunit b, ATP5PD/subunit d, ATP5PO/subunit OSCP. ATP synthase complex consists of a soluble F(1) head domain (subunits alpha(3) and beta(3)) - the catalytic core - and a membrane F(0) domain - the membrane proton channel (subunits c, a, 8, e, f, g, k and j). These two domains are linked by a central stalk (subunits gamma, delta, and epsilon) rotating inside the F1 region and a stationary peripheral stalk (subunits F6, b, d, and OSCP). Interacts with PRICKLE3.

Its subcellular location is the mitochondrion membrane. In terms of biological role, subunit 8, of the mitochondrial membrane ATP synthase complex (F(1)F(0) ATP synthase or Complex V) that produces ATP from ADP in the presence of a proton gradient across the membrane which is generated by electron transport complexes of the respiratory chain. ATP synthase complex consist of a soluble F(1) head domain - the catalytic core - and a membrane F(1) domain - the membrane proton channel. These two domains are linked by a central stalk rotating inside the F(1) region and a stationary peripheral stalk. During catalysis, ATP synthesis in the catalytic domain of F(1) is coupled via a rotary mechanism of the central stalk subunits to proton translocation. In vivo, can only synthesize ATP although its ATP hydrolase activity can be activated artificially in vitro. Part of the complex F(0) domain. The chain is ATP synthase F(0) complex subunit 8 from Pan paniscus (Pygmy chimpanzee).